The following is an 883-amino-acid chain: MLQLWKVVRPARQLELHRLILLLIAFSLGSMGFLAYYVSTSPKAKEPLPLPLGDCSSGGAAGPGPARPPVPPRPPRPPETARTEPVVLVFVESAYSQLGQEIVAILESSRFRYSTELAPGRGDMPTLTDNTHGRYVLVIYENLLKYVNLDAWSRELLDRYCVEYGVGIIGFFRAHEHSLLSAQLKGFPLFLHSNLGLRDYQVNPSAPLLHLTRPSRLEPGPLPGDDWTIFQSNHSTYEPVLLASLRPAEPAVPGPVLRRARLPTVVQDLGLHDGIQRVLFGHGLSFWLHKLIFVDAVAYLTGKRLCLDLDRYILVDIDDIFVGKEGTRMKVADVEALLTTQNKLRTLVPNFTFNLGFSGKFYHTGTEEEDAGDDMLLKHRKEFWWFPHMWSHMQPHLFHNRSVLADQMRLNKQFALEHGIPTDLGYAVAPHHSGVYPIHTQLYEAWKSVWGIQVTSTEEYPHLRPARYRRGFIHNGIMVLPRQTCGLFTHTIFYNEYPGGSRELDRSIRGGELFLTVLLNPISIFMTHLSNYGNDRLGLYTFESLVRFLQCWTRLRLQTLPPVPLAQKYFELFPQERSPLWQNPCDDKRHKDIWSKEKTCDRLPKFLIVGPQKTGTTAIHFFLSLHPAVTSSFPSPSTFEEIQFFNSPNYHKGIDWYMDFFPVPSNASTDFLFEKSATYFDSEVVPRRGAALLPRAKIITVLTNPADRAYSWYQHQRAHGDPVALNYTFYQVISASSQTPLALRSLQNRCLVPGYYSTHLQRWLTYYPSGQLLIVDGQELRTNPAASMESIQKFLGITPFLNYTRTLRFDDDKGFWCQGLEGGKTRCLGRSKGRRYPDMDTESRLFLTDFFRNHNLELSKLLSRLGQPVPSWLREELQHSSLG.

Residues 1 to 18 (MLQLWKVVRPARQLELHR) lie on the Cytoplasmic side of the membrane. A helical; Signal-anchor for type II membrane protein membrane pass occupies residues 19-39 (LILLLIAFSLGSMGFLAYYVS). The Lumenal portion of the chain corresponds to 40–883 (TSPKAKEPLP…REELQHSSLG (844 aa)). The heparan sulfate N-deacetylase 2 stretch occupies residues 41–597 (SPKAKEPLPL…KRHKDIWSKE (557 aa)). The segment at 49 to 81 (PLPLGDCSSGGAAGPGPARPPVPPRPPRPPETA) is disordered. Positions 65–78 (PARPPVPPRPPRPP) are enriched in pro residues. 3 N-linked (GlcNAc...) asparagine glycosylation sites follow: N233, N350, and N400. The segment at 598–883 (KTCDRLPKFL…REELQHSSLG (286 aa)) is heparan sulfate N-sulfotransferase 2. Catalysis depends on K613, which acts as the For sulfotransferase activity. 613-617 (KTGTT) lines the 3'-phosphoadenylyl sulfate pocket. Residue N666 is glycosylated (N-linked (GlcNAc...) asparagine). A 3'-phosphoadenylyl sulfate-binding site is contributed by S711. N-linked (GlcNAc...) asparagine glycosylation is found at N726 and N802. Cysteines 817 and 827 form a disulfide. Residue 832-836 (KGRRY) coordinates 3'-phosphoadenylyl sulfate.

This sequence belongs to the sulfotransferase 1 family. NDST subfamily. Monomer.

Its subcellular location is the golgi apparatus membrane. It catalyses the reaction alpha-D-glucosaminyl-[heparan sulfate](n) + 3'-phosphoadenylyl sulfate = N-sulfo-alpha-D-glucosaminyl-[heparan sulfate](n) + adenosine 3',5'-bisphosphate + 2 H(+). Its pathway is glycan metabolism; heparan sulfate biosynthesis. It participates in glycan metabolism; heparin biosynthesis. Its function is as follows. Essential bifunctional enzyme that catalyzes both the N-deacetylation and the N-sulfation of glucosamine (GlcNAc) of the glycosaminoglycan in heparan sulfate. Modifies the GlcNAc-GlcA disaccharide repeating sugar backbone to make N-sulfated heparosan, a prerequisite substrate for later modifications in heparin biosynthesis. Plays a role in determining the extent and pattern of sulfation of heparan sulfate. Required for the exosomal release of SDCBP, CD63 and syndecan. This Homo sapiens (Human) protein is Bifunctional heparan sulfate N-deacetylase/N-sulfotransferase 2 (NDST2).